The chain runs to 691 residues: Proprotein convertase subtilisin/kexin type 9 (691 aa).

The N-terminal stretch at 1-29 (MGTVSSRRLWWPLPLLLLLLLLGPAGARA) is a signal peptide. Residues 30–151 (QEDDDGDYEE…IEEDSSVFAQ (122 aa)) constitute a propeptide that is removed on maturation. Residue Y37 is modified to Sulfotyrosine. S46 is modified (phosphoserine). Positions 76 to 148 (TYVVVLKEET…VDYIEEDSSV (73 aa)) constitute an Inhibitor I9 domain. Positions 154 to 460 (PWNLERITPA…GWQLFCRTVW (307 aa)) constitute a Peptidase S8 domain. Active-site charge relay system residues include D185 and H225. 2 disulfides stabilise this stretch: C222–C254 and C322–C357. Residue S385 is the Charge relay system of the active site. The segment at 449–691 (GAGWQLFCRT…HLAQASQELQ (243 aa)) is C-terminal domain. 3 cysteine pairs are disulfide-bonded: C456–C526, C476–C525, and C485–C508. N532 carries N-linked (GlcNAc...) asparagine glycosylation. 6 disulfide bridges follow: C533–C600, C551–C599, C561–C587, C607–C678, C625–C677, and C634–C653. Residue S687 is modified to Phosphoserine.

Belongs to the peptidase S8 family. As to quaternary structure, monomer. Can self-associate to form dimers and higher multimers which may have increased LDLR degrading activity. The precursor protein but not the mature protein may form multimers. Interacts with APOB, VLDLR, LRP8/APOER2 and BACE1. The full-length immature form (pro-PCSK9) interacts with SCNN1A, SCNN1B and SCNN1G. The pro-PCSK9 form (via C-terminal domain) interacts with LDLR. Interacts (via the C-terminal domain) with ANXA2 (via repeat Annexin 1); the interaction inhibits the degradation of LDLR. The cofactor is Ca(2+). Cleavage by furin and PCSK5 generates a truncated inactive protein that is unable to induce LDLR degradation. In terms of processing, undergoes autocatalytic cleavage in the endoplasmic reticulum to release the propeptide from the N-terminus and the cleavage of the propeptide is strictly required for its maturation and activation. The cleaved propeptide however remains associated with the catalytic domain through non-covalent interactions, preventing potential substrates from accessing its active site. As a result, it is secreted from cells as a propeptide-containing, enzymatically inactive protein. Post-translationally, phosphorylation protects the propeptide against proteolysis.

It localises to the cytoplasm. The protein resides in the secreted. It is found in the endosome. Its subcellular location is the lysosome. The protein localises to the cell surface. It localises to the endoplasmic reticulum. The protein resides in the golgi apparatus. Its activity is regulated as follows. Its proteolytic activity is autoinhibited by the non-covalent binding of the propeptide to the catalytic domain. Inhibited by EGTA. In terms of biological role, crucial player in the regulation of plasma cholesterol homeostasis. Binds to low-density lipid receptor family members: low density lipoprotein receptor (LDLR), very low density lipoprotein receptor (VLDLR), apolipoprotein E receptor (LRP1/APOER) and apolipoprotein receptor 2 (LRP8/APOER2), and promotes their degradation in intracellular acidic compartments. Acts via a non-proteolytic mechanism to enhance the degradation of the hepatic LDLR through a clathrin LDLRAP1/ARH-mediated pathway. May prevent the recycling of LDLR from endosomes to the cell surface or direct it to lysosomes for degradation. Can induce ubiquitination of LDLR leading to its subsequent degradation. Inhibits intracellular degradation of APOB via the autophagosome/lysosome pathway in a LDLR-independent manner. Involved in the disposal of non-acetylated intermediates of BACE1 in the early secretory pathway. Inhibits epithelial Na(+) channel (ENaC)-mediated Na(+) absorption by reducing ENaC surface expression primarily by increasing its proteasomal degradation. Regulates neuronal apoptosis via modulation of LRP8/APOER2 levels and related anti-apoptotic signaling pathways. This Saimiri boliviensis boliviensis (Bolivian squirrel monkey) protein is Proprotein convertase subtilisin/kexin type 9 (PCSK9).